The chain runs to 232 residues: Octanoyltransferase (232 aa).

The region spanning 44 to 219 (EHTGDELWVV…QLARQFGLVL (176 aa)) is the BPL/LPL catalytic domain. Residues 83–90 (RGGQVTYH), 150–152 (ALG), and 163–165 (GLS) contribute to the substrate site. Cys181 acts as the Acyl-thioester intermediate in catalysis.

The protein belongs to the LipB family.

The protein localises to the cytoplasm. The catalysed reaction is octanoyl-[ACP] + L-lysyl-[protein] = N(6)-octanoyl-L-lysyl-[protein] + holo-[ACP] + H(+). Its pathway is protein modification; protein lipoylation via endogenous pathway; protein N(6)-(lipoyl)lysine from octanoyl-[acyl-carrier-protein]: step 1/2. Functionally, catalyzes the transfer of endogenously produced octanoic acid from octanoyl-acyl-carrier-protein onto the lipoyl domains of lipoate-dependent enzymes. Lipoyl-ACP can also act as a substrate although octanoyl-ACP is likely to be the physiological substrate. The polypeptide is Octanoyltransferase (Xanthomonas campestris pv. campestris (strain 8004)).